A 141-amino-acid chain; its full sequence is HTH-type transcriptional repressor NsrR (141 aa).

An HTH rrf2-type domain is found at 2-129; that stretch reads QLTSFTDYGL…DNYTLADMVK (128 aa). A DNA-binding region (H-T-H motif) is located at residues 28–51; sequence ISQVTEVYGVSRNHMVKIINQLSR. [2Fe-2S] cluster is bound by residues Cys91, Cys96, and Cys102.

[2Fe-2S] cluster is required as a cofactor.

Nitric oxide-sensitive repressor of genes involved in protecting the cell against nitrosative stress. May require iron for activity. This Yersinia pseudotuberculosis serotype O:1b (strain IP 31758) protein is HTH-type transcriptional repressor NsrR.